The sequence spans 1783 residues: uncharacterized protein (1783 aa).

A helical membrane pass occupies residues 16-36; it reads FFLLFGIIFVLFSIIFLETSI. The span at 105–119 shows a compositional bias: low complexity; it reads GSDSGQSNGSGDNQN. Positions 105 to 125 are disordered; the sequence is GSDSGQSNGSGDNQNKTIPRK. A run of 8 helical transmembrane segments spans residues 917–937, 967–987, 1010–1030, 1084–1104, 1660–1680, 1709–1729, 1730–1750, and 1752–1772; these read VSTV…ILLI, VFAG…AFLL, WLSF…ISWI, LFTY…AGTI, FLLG…GISM, FIPA…GVLI, GIQA…FEFL, and YMVG…YFWI.

Belongs to the ABC-4 integral membrane protein family.

Its subcellular location is the cell membrane. This is an uncharacterized protein from Mycoplasma genitalium (strain ATCC 33530 / DSM 19775 / NCTC 10195 / G37) (Mycoplasmoides genitalium).